The chain runs to 364 residues: MDFVRGFWRKHRRKVLVTAGCLGSGYLLYKLYNSHTRRLADLERELAHERENDEIIKTQMKAHFESIQMIVDSTTLPHAMQFLSIRISEEIDVSHVMDRLNQGKGMLSPPEKLQLWDELKILSFTRMVLSLWSVTMLSLYIRVQVNILGRHLYVDTARALGSSHLLEEVDLIDRDDEQKFLSSADFLVTNAMPSLISDMQGSAEEVLKGKQLKDVITTRVLQETVMQIVDVFMSTGSPHHWVDYLMMPQDTKLSRTTSDSSDEAVSKFHQLMVETREVLISTEFTNIVEISLKCFTDVLVEEMETQTEAGGLATGKPLAKVLPQIEKTMNVITAEPSKNRFLQIIRDLPEVKLFFTLLYANMPQ.

The helical transmembrane segment at 15-32 threads the bilayer; that stretch reads VLVTAGCLGSGYLLYKLY. The stretch at 33–62 forms a coiled coil; sequence NSHTRRLADLERELAHERENDEIIKTQMKA.

The protein belongs to the peroxin-3 family.

Its subcellular location is the peroxisome membrane. Functionally, involved in morphology determination of peroxisomes, but not in import of peroxisomal matrix proteins. May act as a docking factor for PEX19 and be necessary for the import of peroxisomal membrane proteins in the peroxisomes. The sequence is that of Peroxisome biogenesis protein 3-2 (PEX3-2) from Arabidopsis thaliana (Mouse-ear cress).